A 72-amino-acid chain; its full sequence is UPF0270 protein YheU (72 aa).

This sequence belongs to the UPF0270 family.

The chain is UPF0270 protein YheU from Shigella dysenteriae serotype 1 (strain Sd197).